We begin with the raw amino-acid sequence, 446 residues long: Probable tRNA modification GTPase MnmE (446 aa).

(6S)-5-formyl-5,6,7,8-tetrahydrofolate is bound by residues arginine 28, glutamate 87, and arginine 126. Residues glycine 218–threonine 373 enclose the TrmE-type G domain. Residue asparagine 228 coordinates K(+). GTP-binding positions include asparagine 228–threonine 233, threonine 247–threonine 253, and aspartate 272–glycine 275. Serine 232 contributes to the Mg(2+) binding site. The K(+) site is built by threonine 247, isoleucine 249, and threonine 252. Mg(2+) is bound at residue threonine 253. Residue lysine 446 coordinates (6S)-5-formyl-5,6,7,8-tetrahydrofolate.

It belongs to the TRAFAC class TrmE-Era-EngA-EngB-Septin-like GTPase superfamily. TrmE GTPase family. Requires K(+) as cofactor.

It is found in the plastid. The protein resides in the chloroplast. Functionally, exhibits a very high intrinsic GTPase hydrolysis rate. Involved in the addition of a carboxymethylaminomethyl (cmnm) group at the wobble position (U34) of certain tRNAs, forming tRNA-cmnm(5)s(2)U34. This is Probable tRNA modification GTPase MnmE from Cyanidioschyzon merolae (strain NIES-3377 / 10D) (Unicellular red alga).